The primary structure comprises 244 residues: L-xylulose reductase (244 aa).

Methionine 1 carries the post-translational modification N-acetylmethionine. 11–39 (LVTGAGKGIGRSIVKALHAAGARVVAVSR) contributes to the NADP(+) binding site. At arginine 21 the chain carries Omega-N-methylarginine. At serine 46 the chain carries Phosphoserine. Serine 136 contacts substrate. Tyrosine 149 acts as the Proton acceptor in catalysis. Lysine 153 is a catalytic residue.

This sequence belongs to the short-chain dehydrogenases/reductases (SDR) family. In terms of assembly, homotetramer.

Its subcellular location is the membrane. The enzyme catalyses xylitol + NADP(+) = L-xylulose + NADPH + H(+). In terms of biological role, catalyzes the NADPH-dependent reduction of several pentoses, tetroses, trioses, alpha-dicarbonyl compounds and L-xylulose. Participates in the uronate cycle of glucose metabolism. May play a role in the water absorption and cellular osmoregulation in the proximal renal tubules by producing xylitol, an osmolyte, thereby preventing osmolytic stress from occurring in the renal tubules. This is L-xylulose reductase (DCXR) from Bos taurus (Bovine).